The following is an 866-amino-acid chain: Probable beta-glucosidase F (866 aa).

Residues 1–20 form the signal peptide; sequence MAAFPAYLALLSYLVPGALS. N-linked (GlcNAc...) asparagine glycosylation is found at N65, N73, and N257. Residue D285 is part of the active site. 8 N-linked (GlcNAc...) asparagine glycosylation sites follow: N328, N360, N395, N421, N474, N659, N664, and N724. The disordered stretch occupies residues 725-748; sequence SSKTYPYPDGYTTEPKPAPRAGGA.

This sequence belongs to the glycosyl hydrolase 3 family.

It localises to the secreted. It carries out the reaction Hydrolysis of terminal, non-reducing beta-D-glucosyl residues with release of beta-D-glucose.. Its pathway is glycan metabolism; cellulose degradation. Beta-glucosidases are one of a number of cellulolytic enzymes involved in the degradation of cellulosic biomass. Catalyzes the last step releasing glucose from the inhibitory cellobiose. This Aspergillus oryzae (strain ATCC 42149 / RIB 40) (Yellow koji mold) protein is Probable beta-glucosidase F (bglF).